A 214-amino-acid chain; its full sequence is MKFFIDTANIDEIKEAVKMGMADGVTTNPSLIAKESGDFETIIKNICDVVDGPVSAEVISLKTAGMVKEAKQLATLHENIVIKIPMTVDGLKAVRMLADQGIRTNVTLVFSPLQALMAAKAGATYVSPFVGRLDDLASDGMVLVEQIIDIYDNYAIDTEIIVASIRNPLHVLDAALMGADVATIPFGVLKKLAAHPLTDRGIDAFLNDWKKAKK.

Lysine 83 (schiff-base intermediate with substrate) is an active-site residue.

Belongs to the transaldolase family. Type 3B subfamily.

The protein resides in the cytoplasm. It carries out the reaction D-sedoheptulose 7-phosphate + D-glyceraldehyde 3-phosphate = D-erythrose 4-phosphate + beta-D-fructose 6-phosphate. Its pathway is carbohydrate degradation; pentose phosphate pathway; D-glyceraldehyde 3-phosphate and beta-D-fructose 6-phosphate from D-ribose 5-phosphate and D-xylulose 5-phosphate (non-oxidative stage): step 2/3. Its function is as follows. Transaldolase is important for the balance of metabolites in the pentose-phosphate pathway. The sequence is that of Probable transaldolase from Desulfosudis oleivorans (strain DSM 6200 / JCM 39069 / Hxd3) (Desulfococcus oleovorans).